We begin with the raw amino-acid sequence, 283 residues long: Diphthine methyl ester synthase (283 aa).

S-adenosyl-L-methionine-binding positions include leucine 9, aspartate 84, glycine 87, 112 to 113 (SI), leucine 163, methionine 221, and histidine 246.

This sequence belongs to the diphthine synthase family.

The protein localises to the cytoplasm. It carries out the reaction 2-[(3S)-amino-3-carboxypropyl]-L-histidyl-[translation elongation factor 2] + 4 S-adenosyl-L-methionine = diphthine methyl ester-[translation elongation factor 2] + 4 S-adenosyl-L-homocysteine + 3 H(+). The protein operates within protein modification; peptidyl-diphthamide biosynthesis. In terms of biological role, S-adenosyl-L-methionine-dependent methyltransferase that catalyzes four methylations of the modified target histidine residue in translation elongation factor 2 (EF-2), to form an intermediate called diphthine methyl ester. The four successive methylation reactions represent the second step of diphthamide biosynthesis. The protein is Diphthine methyl ester synthase (dph5) of Schizosaccharomyces pombe (strain 972 / ATCC 24843) (Fission yeast).